The sequence spans 293 residues: AKT-interacting protein homolog A (293 aa).

The span at 1-11 (MNPFWNMSSAS) shows a compositional bias: polar residues. A disordered region spans residues 1 to 45 (MNPFWNMSSASVRKRSENDEKISTGDQKISPPRSSSAKKQLPPIP). The span at 14–23 (KRSENDEKIS) shows a compositional bias: basic and acidic residues. A compositionally biased stretch (polar residues) spans 24–38 (TGDQKISPPRSSSAK). In terms of domain architecture, UBC core spans 75–223 (YLEYSLLAEF…VVDSVKLCNS (149 aa)). Basic and acidic residues predominate over residues 256–266 (AQKKKSEEQSK). The segment at 256 to 293 (AQKKKSEEQSKGLHVSGLSWVKPGSVLPFSKEENSLQT) is disordered.

Belongs to the ubiquitin-conjugating enzyme family. FTS subfamily.

The protein localises to the cytoplasm. It is found in the cell membrane. May function to promote vesicle trafficking and/or fusion. May also regulate apoptosis. The sequence is that of AKT-interacting protein homolog A (aktip-a) from Xenopus laevis (African clawed frog).